A 172-amino-acid polypeptide reads, in one-letter code: Iron-sulfur cluster assembly protein SufA (172 aa).

A signal peptide spans methionine 1–serine 19. The [4Fe-4S] cluster site is built by cysteine 96, cysteine 164, and cysteine 166.

It belongs to the HesB/IscA family. As to quaternary structure, homodimer.

It localises to the plastid. The protein localises to the apicoplast. Its pathway is cofactor biosynthesis; iron-sulfur cluster biosynthesis. Its function is as follows. Participates in the sulfur mobilization (SUF) pathway for iron-sulfur (Fe-S) cluster biogenesis. Involved in the pre-assembly of [4Fe-4S] clusters and their transfer to target proteins. The chain is Iron-sulfur cluster assembly protein SufA from Plasmodium berghei (strain Anka).